A 196-amino-acid chain; its full sequence is ATP-dependent Clp protease proteolytic subunit (196 aa).

S96 acts as the Nucleophile in catalysis. H121 is an active-site residue.

It belongs to the peptidase S14 family. Fourteen ClpP subunits assemble into 2 heptameric rings which stack back to back to give a disk-like structure with a central cavity, resembling the structure of eukaryotic proteasomes.

It localises to the cytoplasm. It carries out the reaction Hydrolysis of proteins to small peptides in the presence of ATP and magnesium. alpha-casein is the usual test substrate. In the absence of ATP, only oligopeptides shorter than five residues are hydrolyzed (such as succinyl-Leu-Tyr-|-NHMec, and Leu-Tyr-Leu-|-Tyr-Trp, in which cleavage of the -Tyr-|-Leu- and -Tyr-|-Trp bonds also occurs).. In terms of biological role, cleaves peptides in various proteins in a process that requires ATP hydrolysis. Has a chymotrypsin-like activity. Plays a major role in the degradation of misfolded proteins. In Streptococcus equi subsp. zooepidemicus (strain H70), this protein is ATP-dependent Clp protease proteolytic subunit.